Here is a 194-residue protein sequence, read N- to C-terminus: Elongation factor P (194 aa).

The protein belongs to the elongation factor P family.

The protein resides in the cytoplasm. The protein operates within protein biosynthesis; polypeptide chain elongation. In terms of biological role, involved in peptide bond synthesis. Stimulates efficient translation and peptide-bond synthesis on native or reconstituted 70S ribosomes in vitro. Probably functions indirectly by altering the affinity of the ribosome for aminoacyl-tRNA, thus increasing their reactivity as acceptors for peptidyl transferase. This Hydrogenobaculum sp. (strain Y04AAS1) protein is Elongation factor P.